The primary structure comprises 1051 residues: Probable valine--tRNA ligase, mitochondrial (1051 aa).

The N-terminal 20 residues, 1 to 20, are a transit peptide targeting the mitochondrion; sequence MNKLLFLSKKSSTSNLYRFY. The 'HIGH' region signature appears at 71–81; it reads PNVTGSLHIGH. Positions 606-610 match the 'KMSKS' region motif; the sequence is KMSKS. Residue lysine 609 participates in ATP binding. Residues 972–1019 adopt a coiled-coil conformation; that stretch reads KELQISIEFDKEINNQLNQKLINPNQSNDKKILKLENFIKQLQDEIDN.

It belongs to the class-I aminoacyl-tRNA synthetase family.

The protein resides in the mitochondrion. The catalysed reaction is tRNA(Val) + L-valine + ATP = L-valyl-tRNA(Val) + AMP + diphosphate. This chain is Probable valine--tRNA ligase, mitochondrial (valS2), found in Dictyostelium discoideum (Social amoeba).